A 742-amino-acid chain; its full sequence is Collectin-12 (742 aa).

Residues 1–37 (MKDDFAEEEEVQSFGYKRFGIQEGTQCTKCKNNWALK) lie on the Cytoplasmic side of the membrane. Residues 38 to 58 (FSIILLYILCVLLTITIAILG) form a helical; Signal-anchor for type II membrane protein membrane-spanning segment. Over 59-742 (YKVVEKMDNV…DMDKEQIFGV (684 aa)) the chain is Extracellular. Coiled coils occupy residues 71–101 (GLETSHRRYTEKLTEVESDLKKLDDQAGQKA) and 271–334 (NNSA…QLEE). Residues 439–605 (TILQGPPGPR…SEPTSVPEAN (167 aa)) are disordered. Collagen-like domains follow at residues 467–526 (GQKG…SGDP) and 527–586 (GPPG…PGPP). Positions 475–492 (PGPPGPAGEKGPPGPIGP) are enriched in pro residues. Low complexity-rich tracts occupy residues 502-522 (RGSPGSKGQRGSPGKTGLPGP) and 532-556 (QGKDGPQGPQGPPGFQGLQGTVGEP). A compositionally biased stretch (pro residues) spans 571–589 (PGLPGPKGPPGPPGPPGPG). 3 disulfide bridges follow: Cys-607/Cys-618, Cys-635/Cys-730, and Cys-708/Cys-722. One can recognise a C-type lectin domain in the interval 614 to 731 (YTEKCYYFSI…CEDVNNFICE (118 aa)). Ile-644, Asn-646, Glu-650, Asp-670, and Glu-674 together coordinate Ca(2+). Residues Lys-691, Gln-694, and Asp-696 each coordinate a carbohydrate. Positions 694, 696, 697, 706, 707, 718, 719, and 731 each coordinate Ca(2+). A carbohydrate is bound at residue Glu-706. Residues Asn-718 and Asp-719 each contribute to the a carbohydrate site.

In terms of tissue distribution, widely expressed.

It localises to the membrane. Its function is as follows. Scavenger receptor that displays several functions associated with host defense. Binds to carbohydrates. This is Collectin-12 (COLEC12) from Gallus gallus (Chicken).